The sequence spans 321 residues: Thioredoxin reductase (321 aa).

36–43 is a binding site for FAD; the sequence is TGMEKGGQ. A disulfide bond links cysteine 136 and cysteine 139. 287-296 is a binding site for FAD; that stretch reads DVMDHIYRQA.

The protein belongs to the class-II pyridine nucleotide-disulfide oxidoreductase family. Homodimer. It depends on FAD as a cofactor.

Its subcellular location is the cytoplasm. The catalysed reaction is [thioredoxin]-dithiol + NADP(+) = [thioredoxin]-disulfide + NADPH + H(+). This is Thioredoxin reductase (trxB) from Escherichia coli O157:H7.